The sequence spans 121 residues: Small ribosomal subunit protein uS13 (121 aa).

Residues 91 to 121 (HRRGLPVRGQKTKNNARTRKGPVKTVANKKK) form a disordered region.

Belongs to the universal ribosomal protein uS13 family. In terms of assembly, part of the 30S ribosomal subunit. Forms a loose heterodimer with protein S19. Forms two bridges to the 50S subunit in the 70S ribosome.

Functionally, located at the top of the head of the 30S subunit, it contacts several helices of the 16S rRNA. In the 70S ribosome it contacts the 23S rRNA (bridge B1a) and protein L5 of the 50S subunit (bridge B1b), connecting the 2 subunits; these bridges are implicated in subunit movement. Contacts the tRNAs in the A and P-sites. The protein is Small ribosomal subunit protein uS13 of Staphylococcus saprophyticus subsp. saprophyticus (strain ATCC 15305 / DSM 20229 / NCIMB 8711 / NCTC 7292 / S-41).